The following is a 590-amino-acid chain: Cytidine monophosphate-N-acetylneuraminic acid hydroxylase (590 aa).

A Rieske domain is found at 14–112 (LSPVEVANLK…VEMDENNGLL (99 aa)). [2Fe-2S] cluster is bound by residues Cys54, His56, Cys75, and His78.

The protein belongs to the CMP-Neu5Ac hydroxylase family. [2Fe-2S] cluster serves as cofactor.

It is found in the cytoplasm. The enzyme catalyses CMP-N-acetyl-beta-neuraminate + 2 Fe(II)-[cytochrome b5] + O2 + 2 H(+) = CMP-N-glycoloyl-beta-neuraminate + 2 Fe(III)-[cytochrome b5] + H2O. The protein operates within amino-sugar metabolism; N-acetylneuraminate metabolism. Functionally, sialic acids are components of carbohydrate chains of glycoconjugates and are involved in cell-cell recognition and cell-pathogen interactions. Catalyzes the conversion of CMP-N-acetylneuraminic acid (CMP-Neu5Ac) into its hydroxylated derivative CMP-N-glycolylneuraminic acid (CMP-Neu5Gc), a sialic acid abundantly expressed at the surface of many cells. This is Cytidine monophosphate-N-acetylneuraminic acid hydroxylase (CMAH) from Macaca mulatta (Rhesus macaque).